Here is a 200-residue protein sequence, read N- to C-terminus: Recombination protein RecR (200 aa).

The segment at 57-72 (CRSCRTLTEEELCPQC) adopts a C4-type zinc-finger fold. Residues 80–175 (TLLCVVEGPT…VASRIAHGVP (96 aa)) enclose the Toprim domain.

The protein belongs to the RecR family.

In terms of biological role, may play a role in DNA repair. It seems to be involved in an RecBC-independent recombinational process of DNA repair. It may act with RecF and RecO. This is Recombination protein RecR from Pseudomonas savastanoi pv. phaseolicola (strain 1448A / Race 6) (Pseudomonas syringae pv. phaseolicola (strain 1448A / Race 6)).